The primary structure comprises 799 residues: 1-phosphatidylinositol 4,5-bisphosphate phosphodiesterase delta-4 (799 aa).

One can recognise a PH domain in the interval 16-124; the sequence is LLMQEGMPMR…WMRGLHLLVD (109 aa). A substrate binding region spans residues 26–53; it reads KVRSKSWKKLRYFRLQNDGMTVWHARQA. EF-hand domains are found at residues 134–169, 170–205, and 206–237; these read RLDQ…MNVE, MDQE…LTKR, and AEVQ…EQKE. Residues D147, N149, D151, K153, E158, D183, S185, S187, T189, and E194 each coordinate Ca(2+). The GBA motif lies at 213 to 243; it reads ESFSADGQKLTLLEFSDFLREEQKERDCTSE. Residues 290-435 form the PI-PLC X-box domain; it reads QDMTQPLNHY…LRRKILVKGK (146 aa). H305 is a catalytic residue. Ca(2+) contacts are provided by N306, E335, and D337. The active site involves H350. E384 contacts Ca(2+). K433 and K435 together coordinate substrate. S460 carries the phosphoserine modification. Positions 530-646 constitute a PI-PLC Y-box domain; it reads LSSLVIYLKS…GYVLKPDFLR (117 aa). S559 and R586 together coordinate substrate. In terms of domain architecture, C2 spans 646 to 773; it reads RDNQSSFHPE…QGYRHIHLLS (128 aa). Ca(2+)-binding residues include I687, D689, N713, D742, Y743, and D744. Positions 768-771 match the PDZ-binding motif; sequence HIHL.

Interacts with GRIP1. Interacts (via GBA motif) with guanine nucleotide-binding protein G(i) alpha subunit GNAI3 (inactive GDP-bound form); low-affinity interaction. Ca(2+) is required as a cofactor.

It is found in the membrane. The protein localises to the nucleus. It localises to the cytoplasm. The protein resides in the endoplasmic reticulum. It catalyses the reaction a 1,2-diacyl-sn-glycero-3-phospho-(1D-myo-inositol-4,5-bisphosphate) + H2O = 1D-myo-inositol 1,4,5-trisphosphate + a 1,2-diacyl-sn-glycerol + H(+). The enzyme catalyses a 1,2-diacyl-sn-glycero-3-phospho-(1D-myo-inositol) + H2O = 1D-myo-inositol 1-phosphate + a 1,2-diacyl-sn-glycerol + H(+). In terms of biological role, hydrolyzes the phosphatidylinositol 4,5-bisphosphate (PIP2) to generate 2 second messenger molecules diacylglycerol (DAG) and inositol 1,4,5-trisphosphate (IP3). DAG mediates the activation of protein kinase C (PKC), while IP3 releases Ca(2+) from intracellular stores. Required for acrosome reaction in sperm during fertilization, probably by acting as an important enzyme for intracellular Ca(2+) mobilization in the zona pellucida-induced acrosome reaction. May play a role in cell growth. Modulates the liver regeneration in cooperation with nuclear PKC. Overexpression up-regulates the Erk signaling pathway and proliferation. This is 1-phosphatidylinositol 4,5-bisphosphate phosphodiesterase delta-4 (PLCD4) from Macaca fascicularis (Crab-eating macaque).